A 188-amino-acid polypeptide reads, in one-letter code: Probable thymidylate kinase (188 aa).

11-18 (GIDGSGKT) serves as a coordination point for ATP.

Belongs to the thymidylate kinase family.

It carries out the reaction dTMP + ATP = dTDP + ADP. The chain is Probable thymidylate kinase (tmk) from Methanocaldococcus jannaschii (strain ATCC 43067 / DSM 2661 / JAL-1 / JCM 10045 / NBRC 100440) (Methanococcus jannaschii).